Reading from the N-terminus, the 264-residue chain is S-adenosylmethionine decarboxylase proenzyme (264 aa).

Residue serine 112 is the Schiff-base intermediate with substrate; via pyruvic acid of the active site. A Pyruvic acid (Ser); by autocatalysis modification is found at serine 112. Residue histidine 117 is the Proton acceptor; for processing activity of the active site. The active-site Proton donor; for catalytic activity is the cysteine 140.

This sequence belongs to the prokaryotic AdoMetDC family. Type 2 subfamily. Heterooctamer of four alpha and four beta chains arranged as a tetramer of alpha/beta heterodimers. It depends on pyruvate as a cofactor. In terms of processing, is synthesized initially as an inactive proenzyme. Formation of the active enzyme involves a self-maturation process in which the active site pyruvoyl group is generated from an internal serine residue via an autocatalytic post-translational modification. Two non-identical subunits are generated from the proenzyme in this reaction, and the pyruvate is formed at the N-terminus of the alpha chain, which is derived from the carboxyl end of the proenzyme. The post-translation cleavage follows an unusual pathway, termed non-hydrolytic serinolysis, in which the side chain hydroxyl group of the serine supplies its oxygen atom to form the C-terminus of the beta chain, while the remainder of the serine residue undergoes an oxidative deamination to produce ammonia and the pyruvoyl group blocking the N-terminus of the alpha chain.

The catalysed reaction is S-adenosyl-L-methionine + H(+) = S-adenosyl 3-(methylsulfanyl)propylamine + CO2. Its pathway is amine and polyamine biosynthesis; S-adenosylmethioninamine biosynthesis; S-adenosylmethioninamine from S-adenosyl-L-methionine: step 1/1. Catalyzes the decarboxylation of S-adenosylmethionine to S-adenosylmethioninamine (dcAdoMet), the propylamine donor required for the synthesis of the polyamines spermine and spermidine from the diamine putrescine. This is S-adenosylmethionine decarboxylase proenzyme from Sodalis glossinidius (strain morsitans).